Reading from the N-terminus, the 161-residue chain is Protein yippee-like B0546.4 (161 aa).

A Yippee domain is found at 14-111 (SLYGCVVCNT…IENANFEKIA (98 aa)). Zn(2+)-binding residues include C18, C21, C74, and C77. A disordered region spans residues 117 to 161 (PLGEDRQEAPPAPNLEMSRYPLEAEKKSRPQYRTVSVSSSSSAEC). The span at 151–161 (VSVSSSSSAEC) shows a compositional bias: low complexity.

The protein belongs to the yippee family.

This is Protein yippee-like B0546.4 from Caenorhabditis elegans.